The chain runs to 284 residues: UPF0276 protein Ping_0944 (284 aa).

This sequence belongs to the UPF0276 family.

This is UPF0276 protein Ping_0944 from Psychromonas ingrahamii (strain DSM 17664 / CCUG 51855 / 37).